The chain runs to 35 residues: Alpha-amanitin proprotein 1 (35 aa).

A propeptide spanning residues 1–10 (MSDINATRLP) is cleaved from the precursor. A (3R,4R)-4,5-dihydroxyisoleucine; in form alpha-amanitin modification is found at Ile-11. At Ile-11 the chain carries (3R,4S)-4-hydroxyisoleucine; in form gamma-amanitin. Positions 11–18 (IWGIGCNP) form a cross-link, cyclopeptide (Ile-Pro). Positions 12–16 (WGIGC) form a cross-link, 2'-cysteinyl-6'-hydroxytryptophan sulfoxide (Trp-Cys). Pro-18 bears the 4-hydroxyproline mark. Residues 19-35 (CVGDDVTSVLTRGEALC) constitute a propeptide that is removed on maturation.

It belongs to the MSDIN fungal toxin family. In terms of processing, processed by the macrocyclase-peptidase enzyme POPB to yield a toxic cyclic octapeptide. POPB first removes 10 residues from the N-terminus. Conformational trapping of the remaining peptide forces the enzyme to release this intermediate rather than proceed to macrocyclization. The enzyme rebinds the remaining peptide in a different conformation and catalyzes macrocyclization of the N-terminal 8 residues. In terms of tissue distribution, expressed in basidiocarps.

Its function is as follows. Major toxin belonging to the bicyclic octapeptides amatoxins that acts by binding non-competitively to RNA polymerase II and greatly slowing the elongation of transcripts from target promoters. In Amanita exitialis (Guangzhou destroying angel), this protein is Alpha-amanitin proprotein 1.